A 184-amino-acid chain; its full sequence is Ras-related protein RabN2 (184 aa).

Position 3 to 10 (G3 to T10) interacts with GTP. Positions T25–Y32 match the Effector region motif. Residues D50–H54 and T117–D120 contribute to the GTP site.

The protein belongs to the small GTPase superfamily. Rab family.

This is Ras-related protein RabN2 (rabN2) from Dictyostelium discoideum (Social amoeba).